The sequence spans 192 residues: Elongation factor P (192 aa).

Belongs to the elongation factor P family.

It is found in the cytoplasm. It functions in the pathway protein biosynthesis; polypeptide chain elongation. Functionally, involved in peptide bond synthesis. Stimulates efficient translation and peptide-bond synthesis on native or reconstituted 70S ribosomes in vitro. Probably functions indirectly by altering the affinity of the ribosome for aminoacyl-tRNA, thus increasing their reactivity as acceptors for peptidyl transferase. This is Elongation factor P from Borrelia duttonii (strain Ly).